A 285-amino-acid polypeptide reads, in one-letter code: Small ribosomal subunit biogenesis GTPase RsgA (285 aa).

Residues Lys-61 to Phe-215 enclose the CP-type G domain. Residues Thr-110–Asp-113 and Gly-159–Ser-167 contribute to the GTP site. Residues Cys-239, Cys-244, His-246, and Cys-254 each coordinate Zn(2+).

This sequence belongs to the TRAFAC class YlqF/YawG GTPase family. RsgA subfamily. As to quaternary structure, monomer. Associates with 30S ribosomal subunit, binds 16S rRNA. Zn(2+) serves as cofactor.

The protein resides in the cytoplasm. One of several proteins that assist in the late maturation steps of the functional core of the 30S ribosomal subunit. Helps release RbfA from mature subunits. May play a role in the assembly of ribosomal proteins into the subunit. Circularly permuted GTPase that catalyzes slow GTP hydrolysis, GTPase activity is stimulated by the 30S ribosomal subunit. This is Small ribosomal subunit biogenesis GTPase RsgA from Mesomycoplasma hyopneumoniae (strain 7448) (Mycoplasma hyopneumoniae).